Here is a 181-residue protein sequence, read N- to C-terminus: MSQPLKEKYKSEIVPNLIKTFGYKNIHQVPKITKIQINRGLGAAASNNSTLQQTIEEIRIITGQQPIVTMAKKSIAGFKLRENQPLGVTVTLRNTLMFSFLERLINLVLPRVRDFNGLNPNGFDQHGNYNFGLDNQLVFPEISYESVDQQRGFNITIVTTAKTQVEGFNLLQSYGFPFKKN.

It belongs to the universal ribosomal protein uL5 family. As to quaternary structure, part of the 50S ribosomal subunit; contacts the 5S rRNA.

It localises to the plastid. It is found in the chloroplast. Binds 5S rRNA, forms part of the central protuberance of the 50S subunit. The sequence is that of Large ribosomal subunit protein uL5c (rpl5) from Heterosigma akashiwo (strain NIES-293 / 8280G21-1).